The chain runs to 143 residues: Nucleoside diphosphate kinase (143 aa).

The ATP site is built by K11, F59, R87, T93, R104, and N114. H117 (pros-phosphohistidine intermediate) is an active-site residue.

This sequence belongs to the NDK family. In terms of assembly, homotetramer. Mg(2+) serves as cofactor.

Its subcellular location is the cytoplasm. It carries out the reaction a 2'-deoxyribonucleoside 5'-diphosphate + ATP = a 2'-deoxyribonucleoside 5'-triphosphate + ADP. The enzyme catalyses a ribonucleoside 5'-diphosphate + ATP = a ribonucleoside 5'-triphosphate + ADP. Functionally, major role in the synthesis of nucleoside triphosphates other than ATP. The ATP gamma phosphate is transferred to the NDP beta phosphate via a ping-pong mechanism, using a phosphorylated active-site intermediate. The sequence is that of Nucleoside diphosphate kinase from Shewanella sp. (strain ANA-3).